A 157-amino-acid polypeptide reads, in one-letter code: Transcriptional regulator AzlB (157 aa).

An HTH asnC-type domain is found at 5-66 (LDETDKAILR…IVDEKKLGIE (62 aa)). Positions 24–43 (NLNLSKKIGLSPSACLARTK) form a DNA-binding region, H-T-H motif.

Functionally, transcriptional repressor of the azlBCD operon involved in branched-chain amino acid transport. This Bacillus subtilis (strain 168) protein is Transcriptional regulator AzlB (azlB).